The following is a 250-amino-acid chain: Triosephosphate isomerase (250 aa).

9–11 (NWK) is a substrate binding site. H94 serves as the catalytic Electrophile. The Proton acceptor role is filled by E166. Substrate is bound by residues G172, S211, and 232–233 (GG).

This sequence belongs to the triosephosphate isomerase family. Homodimer.

The protein resides in the cytoplasm. The enzyme catalyses D-glyceraldehyde 3-phosphate = dihydroxyacetone phosphate. The protein operates within carbohydrate biosynthesis; gluconeogenesis. Its pathway is carbohydrate degradation; glycolysis; D-glyceraldehyde 3-phosphate from glycerone phosphate: step 1/1. Functionally, involved in the gluconeogenesis. Catalyzes stereospecifically the conversion of dihydroxyacetone phosphate (DHAP) to D-glyceraldehyde-3-phosphate (G3P). The chain is Triosephosphate isomerase from Methylococcus capsulatus (strain ATCC 33009 / NCIMB 11132 / Bath).